We begin with the raw amino-acid sequence, 101 residues long: CRISPR-associated endoribonuclease Cas2 (101 aa).

Residue aspartate 8 coordinates Mg(2+).

The protein belongs to the CRISPR-associated endoribonuclease Cas2 protein family. In terms of assembly, homodimer, forms a heterotetramer with a Cas1 homodimer. Mg(2+) serves as cofactor.

CRISPR (clustered regularly interspaced short palindromic repeat), is an adaptive immune system that provides protection against mobile genetic elements (viruses, transposable elements and conjugative plasmids). CRISPR clusters contain sequences complementary to antecedent mobile elements and target invading nucleic acids. CRISPR clusters are transcribed and processed into CRISPR RNA (crRNA). Functions as a ssRNA-specific endoribonuclease. Involved in the integration of spacer DNA into the CRISPR cassette. The polypeptide is CRISPR-associated endoribonuclease Cas2 (Ligilactobacillus salivarius (strain UCC118) (Lactobacillus salivarius)).